Reading from the N-terminus, the 72-residue chain is Small ribosomal subunit protein bS18 (72 aa).

This sequence belongs to the bacterial ribosomal protein bS18 family. As to quaternary structure, part of the 30S ribosomal subunit. Forms a tight heterodimer with protein bS6.

Its function is as follows. Binds as a heterodimer with protein bS6 to the central domain of the 16S rRNA, where it helps stabilize the platform of the 30S subunit. The chain is Small ribosomal subunit protein bS18 from Francisella philomiragia subsp. philomiragia (strain ATCC 25017 / CCUG 19701 / FSC 153 / O#319-036).